We begin with the raw amino-acid sequence, 432 residues long: Enolase (432 aa).

Residues 41–64 (QVPSGASTGSFEAHELRDGDPKRY) form a disordered region. Residues 52 to 64 (EAHELRDGDPKRY) show a composition bias toward basic and acidic residues. Q168 serves as a coordination point for (2R)-2-phosphoglycerate. The Proton donor role is filled by E211. Residues D248, E289, and D316 each contribute to the Mg(2+) site. (2R)-2-phosphoglycerate contacts are provided by K341, R370, S371, and K392. The Proton acceptor role is filled by K341.

The protein belongs to the enolase family. Mg(2+) serves as cofactor.

Its subcellular location is the cytoplasm. The protein localises to the secreted. The protein resides in the cell surface. The enzyme catalyses (2R)-2-phosphoglycerate = phosphoenolpyruvate + H2O. It participates in carbohydrate degradation; glycolysis; pyruvate from D-glyceraldehyde 3-phosphate: step 4/5. In terms of biological role, catalyzes the reversible conversion of 2-phosphoglycerate (2-PG) into phosphoenolpyruvate (PEP). It is essential for the degradation of carbohydrates via glycolysis. This Synechocystis sp. (strain ATCC 27184 / PCC 6803 / Kazusa) protein is Enolase.